Reading from the N-terminus, the 417-residue chain is NADH-quinone oxidoreductase subunit D (417 aa).

It belongs to the complex I 49 kDa subunit family. In terms of assembly, NDH-1 is composed of 14 different subunits. Subunits NuoB, C, D, E, F, and G constitute the peripheral sector of the complex.

It localises to the cell inner membrane. The catalysed reaction is a quinone + NADH + 5 H(+)(in) = a quinol + NAD(+) + 4 H(+)(out). Its function is as follows. NDH-1 shuttles electrons from NADH, via FMN and iron-sulfur (Fe-S) centers, to quinones in the respiratory chain. The immediate electron acceptor for the enzyme in this species is believed to be ubiquinone. Couples the redox reaction to proton translocation (for every two electrons transferred, four hydrogen ions are translocated across the cytoplasmic membrane), and thus conserves the redox energy in a proton gradient. The protein is NADH-quinone oxidoreductase subunit D of Janthinobacterium sp. (strain Marseille) (Minibacterium massiliensis).